The primary structure comprises 451 residues: Glucose-6-phosphate isomerase (451 aa).

Residue T38 is modified to Phosphothreonine. E290 (proton donor) is an active-site residue. Active-site residues include H311 and K425.

Belongs to the GPI family.

The protein localises to the cytoplasm. The catalysed reaction is alpha-D-glucose 6-phosphate = beta-D-fructose 6-phosphate. The protein operates within carbohydrate biosynthesis; gluconeogenesis. It participates in carbohydrate degradation; glycolysis; D-glyceraldehyde 3-phosphate and glycerone phosphate from D-glucose: step 2/4. Catalyzes the reversible isomerization of glucose-6-phosphate to fructose-6-phosphate. This Shouchella clausii (strain KSM-K16) (Alkalihalobacillus clausii) protein is Glucose-6-phosphate isomerase.